Consider the following 232-residue polypeptide: MPHSPCLLWLLAVTSLVPGTQPLVAGDLEGDELDETPLPAVPCDYDHCRHLQVPCQELQRAGPAACLCPGLSSALQPPHPPRLGEVRVEADMGRAEVHWCAPSSPVNQYWLLLWEGGGAPQKGPSFNSTVRRAELKGLNPGGAYVVCVVAANDAGESRAPGPGAEGLDSADGPNLGPCGRLTVPPRPLTLLHAAMGVGSALALLSCSALVWHFCLRQRWGCPRRGRPSHAGL.

The signal sequence occupies residues Met1–Pro22. Over Leu23–Thr189 the chain is Extracellular. The region spanning Pro77–Gly172 is the Fibronectin type-III domain. The N-linked (GlcNAc...) asparagine glycan is linked to Asn127. Residues Leu190–Val210 traverse the membrane as a helical segment. At Trp211–Leu232 the chain is on the cytoplasmic side.

It localises to the membrane. This is LRRN4 C-terminal-like protein (LRRN4CL) from Bos taurus (Bovine).